The chain runs to 142 residues: Large ribosomal subunit protein uL13 (142 aa).

The protein belongs to the universal ribosomal protein uL13 family. Part of the 50S ribosomal subunit.

Its function is as follows. This protein is one of the early assembly proteins of the 50S ribosomal subunit, although it is not seen to bind rRNA by itself. It is important during the early stages of 50S assembly. In Pasteurella multocida (strain Pm70), this protein is Large ribosomal subunit protein uL13.